Here is a 151-residue protein sequence, read N- to C-terminus: Cell division control protein 2 homolog 2 (151 aa).

The 151-residue stretch at 1 to 151 (ALKEIRMDNE…IMQTLQIESL (151 aa)) folds into the Protein kinase domain. K3 is an ATP binding site. The Proton acceptor role is filled by D113.

It belongs to the protein kinase superfamily. CMGC Ser/Thr protein kinase family. CDC2/CDKX subfamily.

The catalysed reaction is L-seryl-[protein] + ATP = O-phospho-L-seryl-[protein] + ADP + H(+). It catalyses the reaction L-threonyl-[protein] + ATP = O-phospho-L-threonyl-[protein] + ADP + H(+). It carries out the reaction [DNA-directed RNA polymerase] + ATP = phospho-[DNA-directed RNA polymerase] + ADP + H(+). This chain is Cell division control protein 2 homolog 2, found in Pisum sativum (Garden pea).